Here is a 217-residue protein sequence, read N- to C-terminus: Vesicle-associated membrane protein 723 (217 aa).

The Cytoplasmic segment spans residues 1–192; that stretch reads MAQQSLFYSF…KWFQNMKIKL (192 aa). Residues 10–114 form the Longin domain; it reads FIARGTVILV…SLNKEFGSNL (105 aa). The region spanning 130-186 is the v-SNARE coiled-coil homology domain; the sequence is NLAKAKAQVSEVKSLMMENIEKVLARGVICEMLGSSESQPQAFYIKRTQMKRKKWFQ. A helical; Anchor for type IV membrane protein membrane pass occupies residues 193 to 213; that stretch reads IVLAIIIALILIIILSVCGGF. Over 214–217 the chain is Vesicular; that stretch reads NCGK.

It belongs to the synaptobrevin family. In terms of tissue distribution, highly expressed in stems and roots. Detected in flowers and leaves.

It localises to the endoplasmic reticulum membrane. Involved in the targeting and/or fusion of transport vesicles to their target membrane. The chain is Vesicle-associated membrane protein 723 from Arabidopsis thaliana (Mouse-ear cress).